A 503-amino-acid polypeptide reads, in one-letter code: Na(+)-translocating NADH-quinone reductase subunit B (503 aa).

3 consecutive transmembrane segments (helical) span residues 55-75 (MMLV…NSGL), 120-142 (IFLP…FAII), and 160-180 (LILP…FGVV). Thr248 bears the FMN phosphoryl threonine mark. 5 consecutive transmembrane segments (helical) span residues 361-381 (TSTV…IASW), 384-404 (MLSF…MSIL), 417-437 (FFIP…LVFM), 452-472 (WLYG…NPAY), and 475-495 (GVML…NIAL).

The protein belongs to the NqrB/RnfD family. In terms of assembly, composed of six subunits; NqrA, NqrB, NqrC, NqrD, NqrE and NqrF. Requires FMN as cofactor.

The protein resides in the cell inner membrane. It carries out the reaction a ubiquinone + n Na(+)(in) + NADH + H(+) = a ubiquinol + n Na(+)(out) + NAD(+). Functionally, NQR complex catalyzes the reduction of ubiquinone-1 to ubiquinol by two successive reactions, coupled with the transport of Na(+) ions from the cytoplasm to the periplasm. NqrA to NqrE are probably involved in the second step, the conversion of ubisemiquinone to ubiquinol. In Chlamydia trachomatis serovar A (strain ATCC VR-571B / DSM 19440 / HAR-13), this protein is Na(+)-translocating NADH-quinone reductase subunit B.